The chain runs to 453 residues: uncharacterized protein (453 aa).

Disordered regions lie at residues 140-161 and 311-332; these read YGES…TRPQ and TTTR…SASS.

This is an uncharacterized protein from Caenorhabditis elegans.